The primary structure comprises 1040 residues: uncharacterized protein (1040 aa).

Residues 403–588 form the Helicase ATP-binding domain; the sequence is RLEESSKKGG…YSLIKFLRIK (186 aa). 416 to 423 is an ATP binding site; the sequence is DDMGLGKT. Residues 746–798 form an RING-type zinc finger; the sequence is CSLCMDVVAELLIIVPCGHFLCRECLTHVITSSEDMAKQTSNENISPKCSVCE. One can recognise a Helicase C-terminal domain in the interval 866-1032; it reads KIEKALNAVK…ISRLNTKELS (167 aa).

The protein belongs to the SNF2/RAD54 helicase family.

The protein resides in the nucleus. This is an uncharacterized protein from Schizosaccharomyces pombe (strain 972 / ATCC 24843) (Fission yeast).